The following is a 186-amino-acid chain: UPF0397 protein LBUL_1584 (186 aa).

The next 5 helical transmembrane spans lie at 13 to 33 (IAAL…ASIP), 46 to 66 (AFLA…VGFI), 79 to 99 (TWWN…LYAL), 114 to 134 (VIFN…LGSV), and 150 to 170 (QAGL…TILL).

It belongs to the UPF0397 family.

It is found in the cell membrane. This chain is UPF0397 protein LBUL_1584, found in Lactobacillus delbrueckii subsp. bulgaricus (strain ATCC BAA-365 / Lb-18).